The following is a 358-amino-acid chain: Stearoyl-CoA desaturase 2 (358 aa).

The Cytoplasmic portion of the chain corresponds to 1 to 71 (MPAHILQEIS…EGPPPKLEYV (71 aa)). The segment at 16–39 (TTTITAPPSGGQQNGGEKFEKSSH) is disordered. Residues 72–92 (WRNIILMALLHLGALYGITLV) form a helical membrane-spanning segment. Position 74 (Asn74) interacts with substrate. The Lumenal portion of the chain corresponds to 93-96 (PSCK). A helical membrane pass occupies residues 97-117 (LYTCLFAYLYYVISALGITAG). The Cytoplasmic segment spans residues 118–216 (AHRLWSHRTY…EKLVMFQRRY (99 aa)). Fe cation is bound by residues His119 and His124. A Histidine box-1 motif is present at residues 119–124 (HRLWSH). Residues Asn147, Arg154, and Asp155 each contribute to the substrate site. Residues His156, His159, and His160 each contribute to the Fe cation site. The Histidine box-2 signature appears at 156-160 (HRAHH). Substrate is bound by residues Arg187 and Lys188. The chain crosses the membrane as a helical span at residues 217 to 236 (YKPGLLLMCFVLPTLVPWYC). Topologically, residues 237-240 (WGET) are lumenal. A helical transmembrane segment spans residues 241-262 (FVNSLCVSTFLRYAVVLNATWL). Trp261 is a substrate binding site. Residues 263 to 358 (VNSAAHLYGY…RTGDGSCKSG (96 aa)) lie on the Cytoplasmic side of the membrane. Residues His268, His297, His300, and His301 each coordinate Fe cation. The short motif at 297-301 (HNYHH) is the Histidine box-3 element.

Belongs to the fatty acid desaturase type 1 family. Requires Fe(2+) as cofactor. Detected in brain and skin. Highly expressed in brain, and detected at low levels in heart, stomach, lung and testis. Detected both in dermis and epidermis.

Its subcellular location is the endoplasmic reticulum membrane. The protein localises to the microsome membrane. It carries out the reaction octadecanoyl-CoA + 2 Fe(II)-[cytochrome b5] + O2 + 2 H(+) = (9Z)-octadecenoyl-CoA + 2 Fe(III)-[cytochrome b5] + 2 H2O. It catalyses the reaction hexadecanoyl-CoA + 2 Fe(II)-[cytochrome b5] + O2 + 2 H(+) = (9Z)-hexadecenoyl-CoA + 2 Fe(III)-[cytochrome b5] + 2 H2O. Stearoyl-CoA desaturase that utilizes O(2) and electrons from reduced cytochrome b5 to introduce the first double bond into saturated fatty acyl-CoA substrates. Catalyzes the insertion of a cis double bond at the delta-9 position into fatty acyl-CoA substrates including palmitoyl-CoA and stearoyl-CoA. Gives rise to a mixture of 16:1 and 18:1 unsaturated fatty acids. Contributes to the biosynthesis of membrane phospholipids, cholesterol esters and triglycerides, especially during embryonic development and in neonates. Important for normal permeability barrier function of the skin in neonates. This Mus musculus (Mouse) protein is Stearoyl-CoA desaturase 2 (Scd2).